The sequence spans 221 residues: Pre-hexon-linking protein VIII (221 aa).

T65 is subject to Phosphothreonine; by host. The propeptide occupies 113 to 150; that stretch reads AAPWSGVKTGSFCGRGLQLAEPPTTAIYPSGLFHLGRG.

This sequence belongs to the adenoviridae hexon-linking protein family. Interacts with the peripentonal hexons as well as the hexons in the facets. Part of a complex composed of the core-capsid bridging protein, the endosome lysis protein VI and the hexon-linking protein VIII; these interactions bridge the virus core to the capsid. In terms of processing, cleaved by the viral protease during virion maturation. May cause the middle segment to be shed from the capsid.

The protein localises to the virion. Its subcellular location is the host nucleus. Functionally, structural component of the virion that acts as a cement protein on the capsid interior and which glue the peripentonal hexons and group-of-nine hexons together. The protein is Pre-hexon-linking protein VIII of Sus scrofa (Pig).